Consider the following 367-residue polypeptide: 2-aminoethylphosphonate--pyruvate transaminase (367 aa).

N6-(pyridoxal phosphate)lysine is present on Lys194.

Belongs to the class-V pyridoxal-phosphate-dependent aminotransferase family. PhnW subfamily. As to quaternary structure, homodimer. Requires pyridoxal 5'-phosphate as cofactor.

The enzyme catalyses (2-aminoethyl)phosphonate + pyruvate = phosphonoacetaldehyde + L-alanine. Functionally, involved in phosphonate degradation. This chain is 2-aminoethylphosphonate--pyruvate transaminase, found in Salmonella paratyphi B (strain ATCC BAA-1250 / SPB7).